Here is a 465-residue protein sequence, read N- to C-terminus: MNQDTICAIATAQGGAIGSIRVSGPEAITITGRIFTPAKSGKLLSEQKPYTLTFGRIYNGEEMIDEVLVSLFRAPHSYTGEDSTEITCHGSSYILQQVMQLLIKNGCRMAQPGEYTQRAFLNGKMDLSQAEAVADLIASSSAATHRLALSQMRGGFSKELTTLREKLLNFTSMIELELDFSEEDVEFADRSALRRLADEIEEVIARLANSFSVGNVIKNGVPVAIIGETNAGKSTLLNVLLNEDKAIVSDIHGTTRDVIEDTVNIGGITFRFIDTAGIRETSDTIESLGIERTFQKLDQAEIVLWMIDSADAISQLTLLSDKILPRCEHKQLILVFNKVELINETQKNELASQFSEHIGSEIESIFISAKQRLHTDELQQRLVAAAHLPTVTQNDVIVTNVRHYEALTRALDAIHRVQEGLDANISGDFLSQDIRECIFHLSDIAGEVTNDMVLQNIFAHFCIGK.

Residues R21, E85, and K124 each contribute to the (6S)-5-formyl-5,6,7,8-tetrahydrofolate site. The TrmE-type G domain maps to 220-387 (GVPVAIIGET…LQQRLVAAAH (168 aa)). N230 serves as a coordination point for K(+). Residues 230 to 235 (NAGKST), 249 to 255 (SDIHGTT), and 274 to 277 (DTAG) each bind GTP. S234 contributes to the Mg(2+) binding site. K(+)-binding residues include S249, I251, and T254. T255 is a binding site for Mg(2+). A (6S)-5-formyl-5,6,7,8-tetrahydrofolate-binding site is contributed by K465.

Belongs to the TRAFAC class TrmE-Era-EngA-EngB-Septin-like GTPase superfamily. TrmE GTPase family. Homodimer. Heterotetramer of two MnmE and two MnmG subunits. It depends on K(+) as a cofactor.

It is found in the cytoplasm. Exhibits a very high intrinsic GTPase hydrolysis rate. Involved in the addition of a carboxymethylaminomethyl (cmnm) group at the wobble position (U34) of certain tRNAs, forming tRNA-cmnm(5)s(2)U34. The polypeptide is tRNA modification GTPase MnmE (Bacteroides fragilis (strain ATCC 25285 / DSM 2151 / CCUG 4856 / JCM 11019 / LMG 10263 / NCTC 9343 / Onslow / VPI 2553 / EN-2)).